A 238-amino-acid chain; its full sequence is Large ribosomal subunit protein uL2 (238 aa).

The segment covering 1–11 (MGKRLISQNRG) has biased composition (polar residues). Disordered stretches follow at residues 1-22 (MGKR…APSH) and 202-223 (FGGG…APPG).

This sequence belongs to the universal ribosomal protein uL2 family. As to quaternary structure, part of the 50S ribosomal subunit. Forms a bridge to the 30S subunit in the 70S ribosome.

In terms of biological role, one of the primary rRNA binding proteins. Required for association of the 30S and 50S subunits to form the 70S ribosome, for tRNA binding and peptide bond formation. It has been suggested to have peptidyltransferase activity; this is somewhat controversial. Makes several contacts with the 16S rRNA in the 70S ribosome. The protein is Large ribosomal subunit protein uL2 of Methanosarcina acetivorans (strain ATCC 35395 / DSM 2834 / JCM 12185 / C2A).